The sequence spans 160 residues: Glyoxalase domain-containing protein 5 (160 aa).

One can recognise a VOC domain in the interval Arg-37–Tyr-157.

The protein belongs to the glyoxalase I family.

This Homo sapiens (Human) protein is Glyoxalase domain-containing protein 5 (GLOD5).